The primary structure comprises 467 residues: Probable glutamate decarboxylase gamma (467 aa).

At lysine 278 the chain carries N6-(pyridoxal phosphate)lysine.

It belongs to the group II decarboxylase family. Pyridoxal 5'-phosphate is required as a cofactor.

It catalyses the reaction L-glutamate + H(+) = 4-aminobutanoate + CO2. The chain is Probable glutamate decarboxylase gamma from Listeria innocua serovar 6a (strain ATCC BAA-680 / CLIP 11262).